Here is a 361-residue protein sequence, read N- to C-terminus: Phosphoserine aminotransferase (361 aa).

R43 contacts L-glutamate. Pyridoxal 5'-phosphate is bound by residues A77–S78, W103, T152, D172, and Q195. An N6-(pyridoxal phosphate)lysine modification is found at K196. Position 237–238 (N237–T238) interacts with pyridoxal 5'-phosphate.

This sequence belongs to the class-V pyridoxal-phosphate-dependent aminotransferase family. SerC subfamily. In terms of assembly, homodimer. Pyridoxal 5'-phosphate is required as a cofactor.

The protein resides in the cytoplasm. The enzyme catalyses O-phospho-L-serine + 2-oxoglutarate = 3-phosphooxypyruvate + L-glutamate. It catalyses the reaction 4-(phosphooxy)-L-threonine + 2-oxoglutarate = (R)-3-hydroxy-2-oxo-4-phosphooxybutanoate + L-glutamate. It functions in the pathway amino-acid biosynthesis; L-serine biosynthesis; L-serine from 3-phospho-D-glycerate: step 2/3. The protein operates within cofactor biosynthesis; pyridoxine 5'-phosphate biosynthesis; pyridoxine 5'-phosphate from D-erythrose 4-phosphate: step 3/5. Functionally, catalyzes the reversible conversion of 3-phosphohydroxypyruvate to phosphoserine and of 3-hydroxy-2-oxo-4-phosphonooxybutanoate to phosphohydroxythreonine. This chain is Phosphoserine aminotransferase, found in Desulfatibacillum aliphaticivorans.